We begin with the raw amino-acid sequence, 299 residues long: MNKDNVKLAIAPIGWTNDDMPELGSENTFQQIVSEMALAGFTGSEVGSKYPRDPAVLKPMLDIRGIQICNAWFSTFFANGQREKTIDEFVNHMNFLHAMGANVIGCSEQSGSIQGLDKPILGDAKPCFSEEEWQRVAEGYNTLGRLAAEKGMQVCLHHHMGTGIQTTAEIDKFMSLVDERVFLLFDTGHAWYSEGGEAPMLAILKKYLPRINHVHLKDVRPPVIDQVRRDGLSFLDGVKKGTFTVPGDGVIDFRPVFKLLDDFGYKGWMVVEAEQDPALANPFEYAVKARKYIRETAGI.

It belongs to the IolE/MocC family. The cofactor is glutathione. Co(2+) is required as a cofactor. Requires Mn(2+) as cofactor.

It carries out the reaction scyllo-inosose = 3D-3,5/4-trihydroxycyclohexane-1,2-dione + H2O. Catalyzes the dehydration of inosose (2-keto-myo-inositol, 2KMI or 2,4,6/3,5-pentahydroxycyclohexanone) to 3D-(3,5/4)-trihydroxycyclohexane-1,2-dione (D-2,3-diketo-4-deoxy-epi-inositol). The polypeptide is Inosose dehydratase (Klebsiella pneumoniae (strain 342)).